The chain runs to 64 residues: Large ribosomal subunit protein bL35 (64 aa).

Residues 1-24 (MPKMKSHRGACKRFKKTASGKVKR) are compositionally biased toward basic residues. The tract at residues 1–64 (MPKMKSHRGA…EKQIKRMILA (64 aa)) is disordered. Residues 25 to 35 (ERMYGSHNLEK) are compositionally biased toward basic and acidic residues. Residues 36–45 (KNRKRTRRLH) show a composition bias toward basic residues.

Belongs to the bacterial ribosomal protein bL35 family.

This is Large ribosomal subunit protein bL35 from Prosthecochloris aestuarii (strain DSM 271 / SK 413).